A 248-amino-acid polypeptide reads, in one-letter code: Cell division protein ZapD (248 aa).

Belongs to the ZapD family. As to quaternary structure, interacts with FtsZ.

Its subcellular location is the cytoplasm. Its function is as follows. Cell division factor that enhances FtsZ-ring assembly. Directly interacts with FtsZ and promotes bundling of FtsZ protofilaments, with a reduction in FtsZ GTPase activity. The sequence is that of Cell division protein ZapD from Aliivibrio fischeri (strain ATCC 700601 / ES114) (Vibrio fischeri).